Here is a 353-residue protein sequence, read N- to C-terminus: 2-Hydroxyacid oxidase 2 (353 aa).

Residues 2–353 (PLVCLADFKA…SPDLIQFSRL (352 aa)) enclose the FMN hydroxy acid dehydrogenase domain. Residues 77–79 (PTA), Ser-106, and Gln-128 each bind FMN. Tyr-130 contacts a 2-oxocarboxylate. Ser-133 bears the Phosphoserine mark. Thr-156 provides a ligand contact to FMN. Residue Arg-165 coordinates a 2-oxocarboxylate. Lys-224 contacts FMN. The active-site Proton acceptor is His-248. Arg-251 serves as a coordination point for a 2-oxocarboxylate. FMN contacts are provided by residues 279–283 (DGGVR) and 302–303 (GR). A Microbody targeting signal motif is present at residues 351-353 (SRL).

The protein belongs to the FMN-dependent alpha-hydroxy acid dehydrogenase family. As to quaternary structure, homotetramer. Could also form homooctamer. It depends on FMN as a cofactor. Expressed in kidney.

It is found in the peroxisome. It catalyses the reaction a (2S)-2-hydroxycarboxylate + O2 = a 2-oxocarboxylate + H2O2. The enzyme catalyses 2-hydroxyoctanoate + O2 = 2-oxooctanoate + H2O2. It carries out the reaction 2-hydroxyhexadecanoate + O2 = 2-oxohexadecanoate + H2O2. The catalysed reaction is 2-hydroxyhexanoate + O2 = 2-oxohexanoate + H2O2. It catalyses the reaction mandelate + O2 = phenylglyoxylate + H2O2. Its activity is regulated as follows. Is inhibited in vitro by CCPST (4-carboxy-5-(4-chlorophenyl)sulfanyl-1,2,3-thiadiazole). Oxidase that catalyzes the oxidation of medium and long chain hydroxyacids such as 2-hydroxyhexadecanoate, 2-hydroxyoctanoate, 2-hydroxyhexanoate and 2-hydroxybutanoate, to the correspondong 2-oxoacids. Its role in the oxidation of 2-hydroxy fatty acids may contribute to the general pathway of fatty acid alpha-oxidation. Can also use mandelate as substrate. Active in vitro with the artificial electron acceptor 2,6-dichlorophenolindophenol (DCIP), but O2 is believed to be the physiological electron acceptor, leading to the production of H2O2. The chain is 2-Hydroxyacid oxidase 2 (Hao2) from Rattus norvegicus (Rat).